The primary structure comprises 308 residues: Porphobilinogen deaminase (308 aa).

An S-(dipyrrolylmethanemethyl)cysteine modification is found at Cys240.

The protein belongs to the HMBS family. In terms of assembly, monomer. Dipyrromethane serves as cofactor.

The enzyme catalyses 4 porphobilinogen + H2O = hydroxymethylbilane + 4 NH4(+). It functions in the pathway porphyrin-containing compound metabolism; protoporphyrin-IX biosynthesis; coproporphyrinogen-III from 5-aminolevulinate: step 2/4. Tetrapolymerization of the monopyrrole PBG into the hydroxymethylbilane pre-uroporphyrinogen in several discrete steps. This Maridesulfovibrio salexigens (strain ATCC 14822 / DSM 2638 / NCIMB 8403 / VKM B-1763) (Desulfovibrio salexigens) protein is Porphobilinogen deaminase.